The chain runs to 434 residues: Epimerase FSL3 (434 aa).

A substrate-binding site is contributed by 125-126 (GF). The Proton acceptor role is filled by Glu392.

This sequence belongs to the aldose epimerase family. In terms of assembly, monomer.

It functions in the pathway secondary metabolite biosynthesis. Epimerase; part of the gene cluster that mediates the biosynthesis of fusarielins F, G and H, decaketide compounds with 5 methylations and a decaline core that act as mycoestrogens as they stimulate growth of MCF-7 breast cancer cells. The initial compound in the pathway is produced by the reducing polyketide synthase FSL1. FSL1 lacks an active enoyl reductase (ER) domain and biosynthesis of fusarielins relies on the trans-acting enoyl reductase FSL5, before it is released through hydrolysis catalyzed by the thioesterase FSL2. Fusarielins F, G, and H have a C11=C12 cis double bond and is fully reduced between C10 and C11 and between C12 and C13. FSL3 can be involved in the formation of the C11=C12 cis double bond by moving a hypothetical C10=C11 or C12=C13 trans double bond to form prefusarielin. Prefusarielin is oxygenated at C15 and C16 by the cytochrome P450 monooxygenase FSL4, resulting in fusarielin F, which subsequently is epoxidized into fusarielin G by the same enzyme. The final step in the pathway is a reduction of the carboxylic acid moiety to yield fusarielin H via a still undetermined mechanism. The chain is Epimerase FSL3 from Gibberella zeae (strain ATCC MYA-4620 / CBS 123657 / FGSC 9075 / NRRL 31084 / PH-1) (Wheat head blight fungus).